Consider the following 723-residue polypeptide: Probable inactive serine/threonine-protein kinase fnkD (723 aa).

Residues 33–276 (WEIITQLESN…TTSLPKYSTL (244 aa)) enclose the Protein kinase domain. 6 FNIP repeats span residues 301–342 (FNQP…ELAS), 343–384 (FNQT…LLSS), 385–426 (FNQP…SLAS), 524–565 (FNQS…ILPS), 566–606 (FNHP…LGDE), and 647–690 (FNIE…FGIT).

The protein belongs to the protein kinase superfamily. STE Ser/Thr protein kinase family.

This Dictyostelium discoideum (Social amoeba) protein is Probable inactive serine/threonine-protein kinase fnkD (fnkD-1).